We begin with the raw amino-acid sequence, 138 residues long: ATP synthase epsilon chain (138 aa).

This sequence belongs to the ATPase epsilon chain family. F-type ATPases have 2 components, CF(1) - the catalytic core - and CF(0) - the membrane proton channel. CF(1) has five subunits: alpha(3), beta(3), gamma(1), delta(1), epsilon(1). CF(0) has three main subunits: a, b and c.

Its subcellular location is the cell membrane. Its function is as follows. Produces ATP from ADP in the presence of a proton gradient across the membrane. This Streptococcus pyogenes serotype M2 (strain MGAS10270) protein is ATP synthase epsilon chain.